The primary structure comprises 1115 residues: Gamma tubulin complex adapter mto1 (1115 aa).

Positions 25–180 are disordered; sequence LTDEEVRRIL…NYISSSLDQL (156 aa). Composition is skewed to basic and acidic residues over residues 28–41 and 56–71; these read EEVRRILSPRKEGS and EASHKYDFEIDRDSLK. Polar residues-rich tracts occupy residues 72-102, 119-130, and 139-151; these read SDSGSPRLHQNATAPTSSTPLQSPDESVNKL, DTTNFDRLNDNI, and PVLTANQGFQSQE. The residue at position 94 (serine 94) is a Phosphoserine. The segment covering 165–176 has biased composition (low complexity); that stretch reads SDPSSPNYISSS. The stretch at 445-915 forms a coiled coil; the sequence is NEALLLRKQE…ERNSLIKNIV (471 aa). A required for interaction with mto2 region spans residues 523–537; it reads LMRMEQQWREDVDQL. Polar residues predominate over residues 1001 to 1011; sequence GSTSSIPNSPR. Disordered stretches follow at residues 1001 to 1037 and 1067 to 1115; these read GSTSSIPNSPRASKRVSLDSEDKKLVPASPDKSAVQR and EQEG…QEHK. 2 positions are modified to phosphoserine: serine 1005 and serine 1009. Basic and acidic residues-rich tracts occupy residues 1016-1025 and 1067-1084; these read VSLDSEDKKL and EQEGRKRDKLGARERLQD. A coiled-coil region spans residues 1072–1102; that stretch reads KRDKLGARERLQDLIRQNRSLSRQIKTDKES. Composition is skewed to polar residues over residues 1086 to 1095 and 1104 to 1115; these read IRQNRSLSRQ and SRSPSISSQEHK.

As to quaternary structure, interacts with mto2; the interaction is direct and required for efficient binding to the gamma-tubulin complex. Interacts with gamma tubulin complex subunits alp4, alp6 and gtb1. Interacts with mcp6.

It localises to the cytoplasm. The protein localises to the cytoskeleton. It is found in the microtubule organizing center. Its subcellular location is the spindle pole body. Spindle pole body (SPB) component that acts as the gamma-tubulin complex-binding protein of the SPB outer plaque. Promotes nucleation of all cytoplasmic microtubules by recruiting the gamma-tubulin complex to the spindle pole body (SPB), to the interphase microtubule organizing center (iMTOC), and to the equatorial MTOC (eMTOC) during anaphase. In Schizosaccharomyces pombe (strain 972 / ATCC 24843) (Fission yeast), this protein is Gamma tubulin complex adapter mto1.